Consider the following 141-residue polypeptide: Nucleoside triphosphatase NudI (141 aa).

Residues 1–141 (MRQRTIVCPL…RKTLRLKGLL (141 aa)) form the Nudix hydrolase domain. The Nudix box signature appears at 38–59 (GGVESGERIEEALRREIREELG).

This sequence belongs to the Nudix hydrolase family. NudI subfamily. In terms of assembly, monomer. It depends on Mg(2+) as a cofactor.

The catalysed reaction is a ribonucleoside 5'-triphosphate + H2O = a ribonucleoside 5'-phosphate + diphosphate + H(+). The enzyme catalyses a 2'-deoxyribonucleoside 5'-triphosphate + H2O = a 2'-deoxyribonucleoside 5'-phosphate + diphosphate + H(+). It catalyses the reaction dUTP + H2O = dUMP + diphosphate + H(+). It carries out the reaction dTTP + H2O = dTMP + diphosphate + H(+). The catalysed reaction is dCTP + H2O = dCMP + diphosphate + H(+). Functionally, catalyzes the hydrolysis of nucleoside triphosphates, with a preference for pyrimidine deoxynucleoside triphosphates (dUTP, dTTP and dCTP). The chain is Nucleoside triphosphatase NudI from Shigella flexneri serotype 5b (strain 8401).